Reading from the N-terminus, the 303-residue chain is Movement protein (303 aa).

Positions 1–18 (MSNIVSPFSGSSRTTSDV) are enriched in polar residues. 2 disordered regions span residues 1 to 24 (MSNI…QAGG) and 267 to 303 (EESE…LRIK).

It belongs to the bromovirus movement protein family. Post-translationally, phosphorylated by host.

It is found in the host cell junction. Its subcellular location is the host plasmodesma. Its function is as follows. Transports viral genome to neighboring plant cells directly through plasmosdesmata, without any budding. The movement protein allows efficient cell to cell propagation, by bypassing the host cell wall barrier. Acts by forming a tubular structure at the host plasmodesmata, enlarging it enough to allow free passage of virion capsids. The polypeptide is Movement protein (Brome mosaic virus (BMV)).